Consider the following 321-residue polypeptide: Sideroflexin-3 (321 aa).

Met1 is modified (N-acetylmethionine). 4 helical membrane passes run 146 to 164, 174 to 194, 226 to 246, and 266 to 286; these read LGMAYVSATTGAVATALGL, LVGRFVPFAAVAAANCINIPL, FQVVISRICMAIPAMAIPPVI, and LQMGLVGFCLVFATPLCCALF.

The protein belongs to the sideroflexin family.

The protein resides in the mitochondrion membrane. The catalysed reaction is L-serine(in) = L-serine(out). Mitochondrial serine transporter that mediates transport of serine into mitochondria, an important step of the one-carbon metabolism pathway. Mitochondrial serine is converted to glycine and formate, which then exits to the cytosol where it is used to generate the charged folates that serve as one-carbon donors. This chain is Sideroflexin-3 (SFXN3), found in Bos taurus (Bovine).